Consider the following 331-residue polypeptide: Autoinducer 2 import system permease protein LsrC (331 aa).

9 helical membrane-spanning segments follow: residues 14-34 (LIAI…YFSL), 39-59 (LVFS…LVML), 70-90 (IAGL…NLPV), 93-113 (LLTL…VTWL), 115-135 (IPAI…MLLL), 157-177 (LNIS…AWIL), 206-226 (IQII…IVFA), 252-272 (GISL…AFFL), and 284-304 (LPAW…LIFD).

It belongs to the binding-protein-dependent transport system permease family. AraH/RbsC subfamily. In terms of assembly, the complex is composed of two ATP-binding proteins (LsrA), two transmembrane proteins (LsrC and LsrD) and a solute-binding protein (LsrB).

It localises to the cell inner membrane. In terms of biological role, part of the ABC transporter complex LsrABCD involved in autoinducer 2 (AI-2) import. Probably responsible for the translocation of the substrate across the membrane. This is Autoinducer 2 import system permease protein LsrC (lsrC) from Photorhabdus luminescens (Xenorhabdus luminescens).